A 168-amino-acid polypeptide reads, in one-letter code: Shikimate kinase (168 aa).

G10 to T15 lines the ATP pocket. T14 is a binding site for Mg(2+). The substrate site is built by D32, R56, and G77. ATP is bound at residue R115. R133 contacts substrate.

Belongs to the shikimate kinase family. Monomer. Mg(2+) is required as a cofactor.

The protein resides in the cytoplasm. The catalysed reaction is shikimate + ATP = 3-phosphoshikimate + ADP + H(+). Its pathway is metabolic intermediate biosynthesis; chorismate biosynthesis; chorismate from D-erythrose 4-phosphate and phosphoenolpyruvate: step 5/7. In terms of biological role, catalyzes the specific phosphorylation of the 3-hydroxyl group of shikimic acid using ATP as a cosubstrate. The sequence is that of Shikimate kinase from Macrococcus caseolyticus (strain JCSC5402) (Macrococcoides caseolyticum).